A 312-amino-acid chain; its full sequence is Pantothenate kinase (312 aa).

97–104 (GSVAVGKS) serves as a coordination point for ATP.

The protein belongs to the prokaryotic pantothenate kinase family.

It localises to the cytoplasm. It catalyses the reaction (R)-pantothenate + ATP = (R)-4'-phosphopantothenate + ADP + H(+). Its pathway is cofactor biosynthesis; coenzyme A biosynthesis; CoA from (R)-pantothenate: step 1/5. The protein is Pantothenate kinase of Mycolicibacterium paratuberculosis (strain ATCC BAA-968 / K-10) (Mycobacterium paratuberculosis).